The chain runs to 226 residues: Cytidylate kinase (226 aa).

10-18 (GPASSGKST) serves as a coordination point for ATP.

The protein belongs to the cytidylate kinase family. Type 1 subfamily.

The protein resides in the cytoplasm. The enzyme catalyses CMP + ATP = CDP + ADP. It catalyses the reaction dCMP + ATP = dCDP + ADP. The chain is Cytidylate kinase from Streptococcus equi subsp. equi (strain 4047).